Reading from the N-terminus, the 347-residue chain is NADH-quinone oxidoreductase subunit H (347 aa).

Helical transmembrane passes span 21-41 (VAGI…IIYA), 87-107 (GLFL…WAVI), 118-138 (INVG…GVIL), 157-177 (AQMI…VLFA), 195-215 (GIVN…MFLI), 258-278 (NVLL…LPPI), 283-303 (LYAV…FFVF), and 323-343 (WKIF…YLML).

It belongs to the complex I subunit 1 family. NDH-1 is composed of 14 different subunits. Subunits NuoA, H, J, K, L, M, N constitute the membrane sector of the complex.

Its subcellular location is the cell inner membrane. It carries out the reaction a quinone + NADH + 5 H(+)(in) = a quinol + NAD(+) + 4 H(+)(out). Functionally, NDH-1 shuttles electrons from NADH, via FMN and iron-sulfur (Fe-S) centers, to quinones in the respiratory chain. The immediate electron acceptor for the enzyme in this species is believed to be ubiquinone. Couples the redox reaction to proton translocation (for every two electrons transferred, four hydrogen ions are translocated across the cytoplasmic membrane), and thus conserves the redox energy in a proton gradient. This subunit may bind ubiquinone. This Sphingopyxis alaskensis (strain DSM 13593 / LMG 18877 / RB2256) (Sphingomonas alaskensis) protein is NADH-quinone oxidoreductase subunit H.